The sequence spans 657 residues: Glycogen debranching enzyme (657 aa).

Catalysis depends on aspartate 336, which acts as the Nucleophile. The Proton donor role is filled by glutamate 371. Residues 458–467 are compositionally biased toward basic and acidic residues; sequence NEANGEENRD. A disordered region spans residues 458 to 479; the sequence is NEANGEENRDGTNNNYSNNHGK.

The protein belongs to the glycosyl hydrolase 13 family.

It catalyses the reaction Hydrolysis of (1-&gt;6)-alpha-D-glucosidic linkages to branches with degrees of polymerization of three or four glucose residues in limit dextrin.. Its pathway is glycan degradation; glycogen degradation. Its function is as follows. Removes maltotriose and maltotetraose chains that are attached by 1,6-alpha-linkage to the limit dextrin main chain, generating a debranched limit dextrin. This is Glycogen debranching enzyme from Shigella boydii serotype 18 (strain CDC 3083-94 / BS512).